We begin with the raw amino-acid sequence, 125 residues long: uncharacterized protein (125 aa).

This is an uncharacterized protein from Caenorhabditis elegans.